The sequence spans 323 residues: Acetyl-coenzyme A carboxylase carboxyl transferase subunit alpha (323 aa).

Positions 39–293 (RLSKKSQQLT…RRALGDSLRQ (255 aa)) constitute a CoA carboxyltransferase C-terminal domain.

The protein belongs to the AccA family. As to quaternary structure, acetyl-CoA carboxylase is a heterohexamer composed of biotin carboxyl carrier protein (AccB), biotin carboxylase (AccC) and two subunits each of ACCase subunit alpha (AccA) and ACCase subunit beta (AccD).

The protein resides in the cytoplasm. It carries out the reaction N(6)-carboxybiotinyl-L-lysyl-[protein] + acetyl-CoA = N(6)-biotinyl-L-lysyl-[protein] + malonyl-CoA. Its pathway is lipid metabolism; malonyl-CoA biosynthesis; malonyl-CoA from acetyl-CoA: step 1/1. Its function is as follows. Component of the acetyl coenzyme A carboxylase (ACC) complex. First, biotin carboxylase catalyzes the carboxylation of biotin on its carrier protein (BCCP) and then the CO(2) group is transferred by the carboxyltransferase to acetyl-CoA to form malonyl-CoA. In Burkholderia pseudomallei (strain 1106a), this protein is Acetyl-coenzyme A carboxylase carboxyl transferase subunit alpha.